We begin with the raw amino-acid sequence, 661 residues long: 3-hydroxypropionyl-coenzyme A synthetase (661 aa).

Asp526 is an active-site residue. Lys617 is subject to N6-acetyllysine.

It belongs to the ATP-dependent AMP-binding enzyme family. Homotetramer.

It carries out the reaction 3-hydroxypropanoate + ATP + CoA = 3-hydroxypropanoyl-CoA + AMP + diphosphate. In terms of biological role, plays a role in the autotrophic CO(2) fixation pathway. Activates 3-hydroxypropionate to its CoA ester. Can also activate propionate, and to a lesser extent acrylate, acetate and butyrate. In Metallosphaera sedula (strain ATCC 51363 / DSM 5348 / JCM 9185 / NBRC 15509 / TH2), this protein is 3-hydroxypropionyl-coenzyme A synthetase.